Reading from the N-terminus, the 247-residue chain is Adenosylcobinamide-GDP ribazoletransferase (247 aa).

The next 5 helical transmembrane spans lie at 34-54 (IVMF…IFIL), 59-79 (CGIP…TGGF), 113-133 (GGLA…ELAL), 138-158 (MLAA…LLMY), and 187-207 (LAVI…AMVV).

It belongs to the CobS family. Mg(2+) is required as a cofactor.

The protein localises to the cell inner membrane. The catalysed reaction is alpha-ribazole + adenosylcob(III)inamide-GDP = adenosylcob(III)alamin + GMP + H(+). It catalyses the reaction alpha-ribazole 5'-phosphate + adenosylcob(III)inamide-GDP = adenosylcob(III)alamin 5'-phosphate + GMP + H(+). It functions in the pathway cofactor biosynthesis; adenosylcobalamin biosynthesis; adenosylcobalamin from cob(II)yrinate a,c-diamide: step 7/7. Joins adenosylcobinamide-GDP and alpha-ribazole to generate adenosylcobalamin (Ado-cobalamin). Also synthesizes adenosylcobalamin 5'-phosphate from adenosylcobinamide-GDP and alpha-ribazole 5'-phosphate. This is Adenosylcobinamide-GDP ribazoletransferase from Salmonella dublin (strain CT_02021853).